The primary structure comprises 72 residues: Translation initiation factor IF-1 (72 aa).

Positions 1–72 (MAREDLIEVE…SRGRITYRKK (72 aa)) constitute an S1-like domain.

Belongs to the IF-1 family. In terms of assembly, component of the 30S ribosomal translation pre-initiation complex which assembles on the 30S ribosome in the order IF-2 and IF-3, IF-1 and N-formylmethionyl-tRNA(fMet); mRNA recruitment can occur at any time during PIC assembly.

Its subcellular location is the cytoplasm. Its function is as follows. One of the essential components for the initiation of protein synthesis. Stabilizes the binding of IF-2 and IF-3 on the 30S subunit to which N-formylmethionyl-tRNA(fMet) subsequently binds. Helps modulate mRNA selection, yielding the 30S pre-initiation complex (PIC). Upon addition of the 50S ribosomal subunit IF-1, IF-2 and IF-3 are released leaving the mature 70S translation initiation complex. The chain is Translation initiation factor IF-1 from Acholeplasma laidlawii (strain PG-8A).